The following is a 318-amino-acid chain: Ubiquinone biosynthesis protein COQ9, mitochondrial (318 aa).

A mitochondrion-targeting transit peptide spans 1–44; it reads MAAAAVSGALGRAGWRLLQLRCLPVARCRQALVPRAFHASAVGL. The short motif at 16–31 is the SIFI-degron element; the sequence is RLLQLRCLPVARCRQA. Residues 44-98 are disordered; that stretch reads LRSSDEQKQQPPNSFSQQHSETQGAEKPDPESSHSPPRYTDQGGEEEEDYESEEQ. Residues 52–66 show a composition bias toward polar residues; it reads QQPPNSFSQQHSETQ. The span at 86-97 shows a compositional bias: acidic residues; that stretch reads GGEEEEDYESEE. Lysine 175 carries the post-translational modification N6-acetyllysine. Arginine 244 contributes to the a 1,2-diacylglycero-3-phosphoethanolamine binding site.

The protein belongs to the COQ9 family. As to quaternary structure, homodimer. Heterodimer; two heterodimers of COQ7:COQ9 come together on the same side of the lipid pseudo-bilayer and form a curved tetramer with a hydrophobic surface suitable for membrane interaction. These two tetramers assemble into a soluble octamer with a pseudo-bilayer of lipids captured within. Interacts with COQ7; this interaction allows ubiquinone (CoQ) isoprene intermediates presentation to COQ7 and facilitates the COQ7-mediated hydroxylase step. In terms of processing, in response to mitochondrial stress, the precursor protein is ubiquitinated by the SIFI complex in the cytoplasm before mitochondrial import, leading to its degradation. Within the SIFI complex, UBR4 initiates ubiquitin chain that are further elongated or branched by KCMF1.

Its subcellular location is the mitochondrion. It participates in cofactor biosynthesis; ubiquinone biosynthesis. Membrane-associated protein that warps the membrane surface to access and bind aromatic isoprenes with high specificity, including ubiquinone (CoQ) isoprene intermediates and presents them directly to COQ7, therefore facilitating the COQ7-mediated hydroxylase step. Participates in the biosynthesis of coenzyme Q, also named ubiquinone, an essential lipid-soluble electron transporter for aerobic cellular respiration. This is Ubiquinone biosynthesis protein COQ9, mitochondrial from Homo sapiens (Human).